A 63-amino-acid chain; its full sequence is Large ribosomal subunit protein uL30 (63 aa).

It belongs to the universal ribosomal protein uL30 family. In terms of assembly, part of the 50S ribosomal subunit.

The protein is Large ribosomal subunit protein uL30 of Xylella fastidiosa (strain M23).